We begin with the raw amino-acid sequence, 100 residues long: Large ribosomal subunit protein uL23 (100 aa).

It belongs to the universal ribosomal protein uL23 family. Part of the 50S ribosomal subunit. Contacts protein L29, and trigger factor when it is bound to the ribosome.

Functionally, one of the early assembly proteins it binds 23S rRNA. One of the proteins that surrounds the polypeptide exit tunnel on the outside of the ribosome. Forms the main docking site for trigger factor binding to the ribosome. In Salmonella paratyphi A (strain ATCC 9150 / SARB42), this protein is Large ribosomal subunit protein uL23.